Consider the following 548-residue polypeptide: Chaperonin GroEL (548 aa).

ATP is bound by residues 30–33, Lys51, 87–91, Gly415, 479–481, and Asp495; these read TLGP, DGTTT, and NAA.

Belongs to the chaperonin (HSP60) family. As to quaternary structure, forms a cylinder of 14 subunits composed of two heptameric rings stacked back-to-back. Interacts with the co-chaperonin GroES.

It is found in the cytoplasm. The catalysed reaction is ATP + H2O + a folded polypeptide = ADP + phosphate + an unfolded polypeptide.. Its function is as follows. Together with its co-chaperonin GroES, plays an essential role in assisting protein folding. The GroEL-GroES system forms a nano-cage that allows encapsulation of the non-native substrate proteins and provides a physical environment optimized to promote and accelerate protein folding. The polypeptide is Chaperonin GroEL (Pseudomonas fluorescens (strain Pf0-1)).